Here is a 278-residue protein sequence, read N- to C-terminus: 4-deoxy-L-threo-5-hexosulose-uronate ketol-isomerase (278 aa).

Zn(2+) contacts are provided by H196, H198, E203, and H245.

The protein belongs to the KduI family. As to quaternary structure, homohexamer. It depends on Zn(2+) as a cofactor.

It catalyses the reaction 5-dehydro-4-deoxy-D-glucuronate = 3-deoxy-D-glycero-2,5-hexodiulosonate. It participates in glycan metabolism; pectin degradation; 2-dehydro-3-deoxy-D-gluconate from pectin: step 4/5. Functionally, catalyzes the isomerization of 5-dehydro-4-deoxy-D-glucuronate to 3-deoxy-D-glycero-2,5-hexodiulosonate. The sequence is that of 4-deoxy-L-threo-5-hexosulose-uronate ketol-isomerase from Escherichia coli (strain 55989 / EAEC).